Here is a 382-residue protein sequence, read N- to C-terminus: MESVERVNLLGLDGAALSELVGQWGGKPFRARQLQRWVHQRGADSFDAMTDLARDFRAQLARDCVIEALPVNTEQRSSDGTRKWLFDVGQGNAIETVFIPEDDRGTLCISSQAGCVVNCRFCSTGHQGFNRNLRASEIIGQLWWAKRVLEAAADTARLPGGKAGEDTRVISNVVMMGMGEPLLNYDQVLPALRLMLDDNAYGLSRRRVTVSTSGVVPMMDRLSQDCPLALAVSLHAPNDALRDELVPLNRKYPLNALLAACERYLAHAPRDFITFEYCMLDGINDTDQHARELIQLARQVRCKLNLIPFNPFPASGLKRSPSARVRVFAQRLMDAGIVTTVRKTRGDDIDAACGQLAGEVRDRTRITERNATRTIPIQQVHA.

Glu95 serves as the catalytic Proton acceptor. The 248-residue stretch at Glu101–Asp348 folds into the Radical SAM core domain. A disulfide bond links Cys108 and Cys353. 3 residues coordinate [4Fe-4S] cluster: Cys115, Cys119, and Cys122. S-adenosyl-L-methionine-binding positions include Gly179–Glu180, Ser211, Ser233–His235, and Asn310. The active-site S-methylcysteine intermediate is Cys353.

Belongs to the radical SAM superfamily. RlmN family. It depends on [4Fe-4S] cluster as a cofactor.

It is found in the cytoplasm. The catalysed reaction is adenosine(2503) in 23S rRNA + 2 reduced [2Fe-2S]-[ferredoxin] + 2 S-adenosyl-L-methionine = 2-methyladenosine(2503) in 23S rRNA + 5'-deoxyadenosine + L-methionine + 2 oxidized [2Fe-2S]-[ferredoxin] + S-adenosyl-L-homocysteine. It carries out the reaction adenosine(37) in tRNA + 2 reduced [2Fe-2S]-[ferredoxin] + 2 S-adenosyl-L-methionine = 2-methyladenosine(37) in tRNA + 5'-deoxyadenosine + L-methionine + 2 oxidized [2Fe-2S]-[ferredoxin] + S-adenosyl-L-homocysteine. Functionally, specifically methylates position 2 of adenine 2503 in 23S rRNA and position 2 of adenine 37 in tRNAs. m2A2503 modification seems to play a crucial role in the proofreading step occurring at the peptidyl transferase center and thus would serve to optimize ribosomal fidelity. This chain is Dual-specificity RNA methyltransferase RlmN, found in Bordetella parapertussis (strain 12822 / ATCC BAA-587 / NCTC 13253).